Here is a 763-residue protein sequence, read N- to C-terminus: Phosphoglycerol transferase I (763 aa).

4 helical membrane-spanning segments follow: residues 1–21, 26–46, 77–97, and 108–128; these read MSEL…AWKA, WWFA…ITLY, ILPG…LGWV, and VGYS…SPAF.

It belongs to the OpgB family.

It localises to the cell inner membrane. It carries out the reaction a phosphatidylglycerol + a membrane-derived-oligosaccharide D-glucose = a 1,2-diacyl-sn-glycerol + a membrane-derived-oligosaccharide 6-(glycerophospho)-D-glucose.. It participates in glycan metabolism; osmoregulated periplasmic glucan (OPG) biosynthesis. Functionally, transfers a phosphoglycerol residue from phosphatidylglycerol to the membrane-bound nascent glucan backbones. The protein is Phosphoglycerol transferase I of Salmonella heidelberg (strain SL476).